Reading from the N-terminus, the 278-residue chain is uncharacterized protein (278 aa).

A compositionally biased stretch (pro residues) spans P127–F151. The interval P127–L174 is disordered. Positions P164 to L174 are enriched in low complexity.

This is an uncharacterized protein from Botryotinia fuckeliana (Noble rot fungus).